An 823-amino-acid chain; its full sequence is Dimethyl sulfoxide/trimethylamine N-oxide reductase (823 aa).

Positions 1 to 42 form a signal peptide, tat-type signal; sequence MTKFSGNELRAELYRRAFLSYSVAPGALGMFGRSLLAKGARA. Residues 156–160, Trp158, Ser189, 232–233, 262–263, 283–285, 364–365, Arg368, Asn476, His480, 500–501, Arg523, Asp553, 685–686, 691–693, Asn779, and 796–797 contribute to the Mo-bis(molybdopterin guanine dinucleotide) site; these read YGWKS, KT, ID, QTD, WS, HD, HP, HSQ, and GQ.

In terms of assembly, homodimer. It depends on Mo-bis(molybdopterin guanine dinucleotide) as a cofactor. Post-translationally, predicted to be exported by the Tat system. The position of the signal peptide cleavage has been experimentally proven.

It is found in the periplasm. It carries out the reaction dimethyl sulfide + a menaquinone + H2O = dimethyl sulfoxide + a menaquinol. The catalysed reaction is trimethylamine + 2 Fe(III)-[cytochrome c] + H2O = trimethylamine N-oxide + 2 Fe(II)-[cytochrome c] + 3 H(+). Functionally, catalyzes the reduction of dimethyl sulfoxide (DMSO) and trimethylamine N-oxide (TMAO) to dimethyl sulfide (DMS) and trimethylamine, respectively. The terminal DMSO reductase can also use various sulfoxides and N-oxide compounds as terminal electron acceptor in addition to DMSO and TMAO. The chain is Dimethyl sulfoxide/trimethylamine N-oxide reductase (dorA) from Rhodobacter capsulatus (Rhodopseudomonas capsulata).